The chain runs to 429 residues: Bifunctional phosphoribosylaminoimidazole carboxylase/phosphoribosylaminoimidazole succinocarboxamide synthetase (429 aa).

Residues 7 to 264 are SAICAR synthetase; that stretch reads ASIEGYKLGK…WVAEQLADIV (258 aa). The tract at residues 7–264 is SAICAR synthetase domain; the sequence is ASIEGYKLGK…WVAEQLADIV (258 aa). Residues 265 to 429 form an AIR carboxylase region; the sequence is PKKDHLVVIL…DKELRGVRNA (165 aa). The interval 270-429 is AIR carboxylase domain; sequence LVVILMGSAS…DKELRGVRNA (160 aa). Serine 335 is a binding site for CO2.

This sequence in the N-terminal section; belongs to the SAICAR synthetase family. The protein in the C-terminal section; belongs to the AIR carboxylase family. Class II subfamily. In terms of assembly, homooctamer.

It catalyses the reaction 5-amino-1-(5-phospho-D-ribosyl)imidazole-4-carboxylate + L-aspartate + ATP = (2S)-2-[5-amino-1-(5-phospho-beta-D-ribosyl)imidazole-4-carboxamido]succinate + ADP + phosphate + 2 H(+). The enzyme catalyses 5-amino-1-(5-phospho-D-ribosyl)imidazole-4-carboxylate + H(+) = 5-amino-1-(5-phospho-beta-D-ribosyl)imidazole + CO2. The protein operates within purine metabolism; IMP biosynthesis via de novo pathway; 5-amino-1-(5-phospho-D-ribosyl)imidazole-4-carboxamide from 5-amino-1-(5-phospho-D-ribosyl)imidazole-4-carboxylate: step 1/2. Its pathway is purine metabolism; IMP biosynthesis via de novo pathway; 5-amino-1-(5-phospho-D-ribosyl)imidazole-4-carboxylate from 5-amino-1-(5-phospho-D-ribosyl)imidazole (carboxylase route): step 1/1. Functionally, bifunctional phosphoribosylaminoimidazole carboxylase and phosphoribosylaminoimidazole succinocarboxamide synthetase catalyzing two reactions of the de novo purine biosynthetic pathway. In Drosophila melanogaster (Fruit fly), this protein is Bifunctional phosphoribosylaminoimidazole carboxylase/phosphoribosylaminoimidazole succinocarboxamide synthetase.